Consider the following 443-residue polypeptide: EGF-containing fibulin-like extracellular matrix protein 2 (443 aa).

The N-terminal stretch at 1–23 is a signal peptide; sequence MLPCASCLPGSLLLWALLLLLLG. The region spanning 36–81 is the EGF-like 1; atypical domain; it reads YTECTDGYEWDPDSQHCRDVNECLTIPEACKGEMKCINHYGGYLCL. 18 disulfides stabilise this stretch: Cys58–Cys121, Cys65–Cys80, Cys71–Cys109, Cys127–Cys140, Cys134–Cys149, Cys151–Cys162, Cys168–Cys177, Cys173–Cys186, Cys188–Cys201, Cys207–Cys217, Cys213–Cys226, Cys228–Cys241, Cys247–Cys258, Cys254–Cys267, Cys269–Cys281, Cys287–Cys300, Cys294–Cys309, and Cys315–Cys327. Residues 123–163 form the EGF-like 2; calcium-binding domain; that stretch reads DVDECAQALHDCRPSQDCHNLPGSYQCTCPDGYRKIGPECV. The EGF-like 3; calcium-binding domain occupies 164–202; that stretch reads DIDECRYRYCQHRCVNLPGSFRCQCEPGFQLGPNNRSCV. An N-linked (GlcNAc...) asparagine glycan is attached at Asn198. Positions 203-242 constitute an EGF-like 4; calcium-binding domain; the sequence is DVNECDMGAPCEQRCFNSYGTFLCRCHQGYELHRDGFSCS. An EGF-like 5; calcium-binding domain is found at 243-282; that stretch reads DIDECSYSSYLCQYRCINEPGRFSCHCPQGYQLLATRLCQ. In terms of domain architecture, EGF-like 6; calcium-binding spans 283–328; sequence DIDECESGAHQCSEAQTCVNFHGGYRCVDTNRCVEPYIQVSENRCL. Asn394 carries an N-linked (GlcNAc...) asparagine glycan.

Belongs to the fibulin family. In terms of assembly, homodimer; disulfide-linked. Multimer; allows heparin binding. Monomer. Interacts with FBN1 (via N-terminal domain); this interaction inhibits EFEMP2 binding to LOX and ELN. Interacts with LOX (via propeptide); this interaction is strong and facilitates formation of ternary complexes with ELN during elastic fiber assembly; this interaction limits interaction of EFEMP2 with FBLN5. Interacts with PITX2. Interacts with ELN with moderate affinity; this interaction regulates ELN self-assembly maturation stage. Interacts with FBLN5 with moderate affinity. Interacts with LOXL1 (via propeptide), LTBP1 and TGFB1 stronger than with LOXL2 and LTBP3. Interacts with PCOLCE. Interacts with collagen type IV trimer (COL4A1-COL4A1-COL4A2), NID2 and moderately with COL15A1-derived endostatin. Interacts with EMILIN1; this interaction promotes the incorporation of EFEMP2 into the extracellular matrix. Interacts with LTBP4; the LTBP4 long form (LTBP4L) has a stronger binding affinity than the LTBP4 short form and the LTBP4 long form promotes fibrillar deposition of EFEMP2. In terms of processing, N-glycosylated; contains mostly complex-type glycans. Not O-glycosylated. Post-translationally, cleaved by ELANE; produces a 50-55 kDa fragment. Cleaved by MMP2 and MMP9; produces several fragments.

It localises to the secreted. It is found in the extracellular space. The protein localises to the extracellular matrix. The protein resides in the basement membrane. Plays a crucial role in elastic fiber formation in tissue, and in the formation of ultrastructural connections between elastic laminae and smooth muscle cells in the aorta, therefore participates in terminal differentiation and maturation of smooth muscle cell (SMC) and in the mechanical properties and wall integrity maintenance of the aorta. In addition, is involved in the control of collagen fibril assembly in tissue throught proteolytic activation of LOX leading to cross- linking of collagen and elastin. Also promotes ELN coacervation and participates in the deposition of ELN coacervates on to microfibrils but also regulates ELN cross- linking through LOX interaction. Moreover adheres to the cells through heparin binding in a calcium-dependent manner and regulates vascularlar smooth muscle cells proliferation through angiotensin signaling. In Homo sapiens (Human), this protein is EGF-containing fibulin-like extracellular matrix protein 2.